The sequence spans 322 residues: Lipoyl synthase (322 aa).

The disordered stretch occupies residues 1-24; it reads MVTVLDTVSKPRPRHPEKAHRPDQ. Residues 14–24 show a composition bias toward basic and acidic residues; it reads RHPEKAHRPDQ. [4Fe-4S] cluster is bound by residues C59, C64, C70, C85, C89, C92, and S298. The Radical SAM core domain maps to 71–287; that stretch reads WDKKHATFMI…ETIAYTKGFL (217 aa).

The protein belongs to the radical SAM superfamily. Lipoyl synthase family. [4Fe-4S] cluster is required as a cofactor.

It localises to the cytoplasm. It catalyses the reaction [[Fe-S] cluster scaffold protein carrying a second [4Fe-4S](2+) cluster] + N(6)-octanoyl-L-lysyl-[protein] + 2 oxidized [2Fe-2S]-[ferredoxin] + 2 S-adenosyl-L-methionine + 4 H(+) = [[Fe-S] cluster scaffold protein] + N(6)-[(R)-dihydrolipoyl]-L-lysyl-[protein] + 4 Fe(3+) + 2 hydrogen sulfide + 2 5'-deoxyadenosine + 2 L-methionine + 2 reduced [2Fe-2S]-[ferredoxin]. It functions in the pathway protein modification; protein lipoylation via endogenous pathway; protein N(6)-(lipoyl)lysine from octanoyl-[acyl-carrier-protein]: step 2/2. In terms of biological role, catalyzes the radical-mediated insertion of two sulfur atoms into the C-6 and C-8 positions of the octanoyl moiety bound to the lipoyl domains of lipoate-dependent enzymes, thereby converting the octanoylated domains into lipoylated derivatives. In Chelativorans sp. (strain BNC1), this protein is Lipoyl synthase.